Here is a 371-residue protein sequence, read N- to C-terminus: Cytochrome b (371 aa).

The next 4 helical transmembrane spans lie at 25–45, 69–90, 105–125, and 170–190; these read FGSMLLTCLALQTMTGFFLAI, WTMQSLHAIGASLFFICIYIHI, WLSGITLLFTLMATAFFGYVL, and FFALHFILPFIIISLSSAHIM. H75 and H89 together coordinate heme b. Heme b contacts are provided by H174 and H188. Position 193 (H193) interacts with a ubiquinone. 4 consecutive transmembrane segments (helical) span residues 218–238, 280–300, 312–332, and 339–358; these read NKDMLTATIMITMLFITLSFL, LGGTLALLTSVMILATTPFTH, MTQTLFWILIATLITITWTAT, and FMFISQMASMIYFSFFFMNP.

It belongs to the cytochrome b family. As to quaternary structure, the cytochrome bc1 complex contains 3 respiratory subunits (MT-CYB, CYC1 and UQCRFS1), 2 core proteins (UQCRC1 and UQCRC2) and probably 6 low-molecular weight proteins. The cofactor is heme b.

It is found in the mitochondrion inner membrane. Functionally, component of the ubiquinol-cytochrome c reductase complex (complex III or cytochrome b-c1 complex) that is part of the mitochondrial respiratory chain. The b-c1 complex mediates electron transfer from ubiquinol to cytochrome c. Contributes to the generation of a proton gradient across the mitochondrial membrane that is then used for ATP synthesis. This Elapsoidea nigra (Usambara garter snake) protein is Cytochrome b (MT-CYB).